The chain runs to 585 residues: Archaeosine synthase (585 aa).

The PUA domain maps to 516–584; that stretch reads TKTVEIDGFV…IGVEIRHVEE (69 aa).

The protein belongs to the archaeosine synthase type 1 family. Homodimer.

The enzyme catalyses 7-cyano-7-carbaguanosine(15) in tRNA + L-glutamine + H2O = archaeosine(15) in tRNA + L-glutamate. The protein operates within tRNA modification; archaeosine-tRNA biosynthesis. Is responsible for the final step in the biosynthesis of archaeosine, a modified nucleoside present in the dihydrouridine loop (D-loop) of archaeal tRNA. Catalyzes the conversion of 7-cyano-7-deazaguanine (preQ0)-modified tRNA to archaeosine-tRNA, transforming a nitrile group to a formamidine group. The sequence is that of Archaeosine synthase from Haloferax volcanii (strain ATCC 29605 / DSM 3757 / JCM 8879 / NBRC 14742 / NCIMB 2012 / VKM B-1768 / DS2) (Halobacterium volcanii).